The sequence spans 171 residues: Co-chaperone protein HscB homolog (171 aa).

The region spanning 2–74 (NHFELFGLPL…ISRAEYLLVQ (73 aa)) is the J domain.

The protein belongs to the HscB family. In terms of assembly, interacts with HscA and stimulates its ATPase activity.

Functionally, co-chaperone involved in the maturation of iron-sulfur cluster-containing proteins. Seems to help targeting proteins to be folded toward HscA. The chain is Co-chaperone protein HscB homolog from Vibrio atlanticus (strain LGP32) (Vibrio splendidus (strain Mel32)).